A 184-amino-acid chain; its full sequence is UPS-like protein C36.10 (184 aa).

The PRELI/MSF1 domain occupies 1 to 172; it reads MKIFESCHLF…VLEKINMSVF (172 aa).

Belongs to the slowmo family.

The protein resides in the cytoplasm. Its subcellular location is the mitochondrion inner membrane. It localises to the mitochondrion intermembrane space. Its function is as follows. Required for mitochondrial morphology. May control phospholipid metabolism in the mitochondrial intermembrane space. This chain is UPS-like protein C36.10, found in Schizosaccharomyces pombe (strain 972 / ATCC 24843) (Fission yeast).